A 193-amino-acid polypeptide reads, in one-letter code: Protein hunchback (193 aa).

2 disordered regions span residues 16-126 and 146-193; these read SHHH…ATTT and SNDK…KYMA. The span at 17–31 shows a compositional bias: basic residues; sequence HHHHHHHAHHSHHQH. Low complexity-rich tracts occupy residues 35-46 and 56-77; these read SNSNSNASSPHQ and SSNNLQLEQYLKQQQQQQQQQQ. Positions 89–99 are enriched in polar residues; sequence PSPSNNDQNSR. The segment covering 174–193 has biased composition (basic and acidic residues); the sequence is EPEKEHDLMSNSSEDMKYMA.

It belongs to the hunchback C2H2-type zinc-finger protein family.

The protein localises to the nucleus. Gap class segmentation protein that controls development of head structures. This chain is Protein hunchback (hb), found in Drosophila iki (Fruit fly).